The chain runs to 191 residues: GDP-mannose pyrophosphatase (191 aa).

Residues Tyr-17, 38-40 (KRE), Arg-67, and 85-87 (AGL) each bind GDP-alpha-D-mannose. Residues 43–180 (DRGNGATILL…EIRDGKTVLL (138 aa)) enclose the Nudix hydrolase domain. Ala-85, Glu-100, and Glu-104 together coordinate Mg(2+). The Nudix box signature appears at 86-106 (GLLDNDEPEVCIRKEAIEETG). GDP-alpha-D-mannose is bound by residues Glu-104, Glu-127, 150–151 (DE), and Lys-176. Glu-151 contributes to the Mg(2+) binding site.

Belongs to the Nudix hydrolase family. NudK subfamily. In terms of assembly, homodimer. It depends on Mg(2+) as a cofactor.

It carries out the reaction GDP-alpha-D-mannose + H2O = alpha-D-mannose 1-phosphate + GMP + 2 H(+). Nucleoside diphosphate sugar hydrolase that hydrolyzes GDP-mannose as its preferred substrate, yielding GMP and mannose-1-phosphate. The polypeptide is GDP-mannose pyrophosphatase (nudK) (Salmonella arizonae (strain ATCC BAA-731 / CDC346-86 / RSK2980)).